The chain runs to 334 residues: Ketol-acid reductoisomerase (NADP(+)) (334 aa).

One can recognise a KARI N-terminal Rossmann domain in the interval 1–181 (MTTVYYDQDV…GATRAGVIET (181 aa)). Residues 25-28 (YGSQ), arginine 48, serine 52, and 82-85 (DEIQ) contribute to the NADP(+) site. The active site involves histidine 107. Residue glycine 133 participates in NADP(+) binding. The region spanning 182 to 327 (TFKEETETDL…RELREMMPFI (146 aa)) is the KARI C-terminal knotted domain. Mg(2+) contacts are provided by aspartate 190, glutamate 194, glutamate 226, and glutamate 230. Position 251 (serine 251) interacts with substrate.

Belongs to the ketol-acid reductoisomerase family. It depends on Mg(2+) as a cofactor.

It catalyses the reaction (2R)-2,3-dihydroxy-3-methylbutanoate + NADP(+) = (2S)-2-acetolactate + NADPH + H(+). The enzyme catalyses (2R,3R)-2,3-dihydroxy-3-methylpentanoate + NADP(+) = (S)-2-ethyl-2-hydroxy-3-oxobutanoate + NADPH + H(+). The protein operates within amino-acid biosynthesis; L-isoleucine biosynthesis; L-isoleucine from 2-oxobutanoate: step 2/4. It functions in the pathway amino-acid biosynthesis; L-valine biosynthesis; L-valine from pyruvate: step 2/4. Involved in the biosynthesis of branched-chain amino acids (BCAA). Catalyzes an alkyl-migration followed by a ketol-acid reduction of (S)-2-acetolactate (S2AL) to yield (R)-2,3-dihydroxy-isovalerate. In the isomerase reaction, S2AL is rearranged via a Mg-dependent methyl migration to produce 3-hydroxy-3-methyl-2-ketobutyrate (HMKB). In the reductase reaction, this 2-ketoacid undergoes a metal-dependent reduction by NADPH to yield (R)-2,3-dihydroxy-isovalerate. This chain is Ketol-acid reductoisomerase (NADP(+)), found in Staphylococcus aureus (strain MSSA476).